A 377-amino-acid polypeptide reads, in one-letter code: MAWRGWAQRGWGCGQAWTLPVCGGSYEELTAALAPSRLLRRRFNFFIQQKCGFRKAPRKVEPRRSDTSSEAYKRSALIPPVEETAFYPSPYPIRTLVKPLFFTVGFTGCAFGSAAIWQYESLKSKVQSYFDGIKADWLDSIRPQKEGDFRKEINKWWNNLSDGQRTVTGIIAANVFVFCLWRVPSLQRTMIRYFTSNPASKVLCSPMLLSTFSHFSLFHMAANMYVLWSFSSSIVNILGQEQFMAVYLSAGVISTFVSYVCKVATGRYGPSLGASGAIMTVLAAVCTKIPEGRLAIIFLPMFTFTAGNALKAIIAMDTAGMILGWKFFDHAAHLGGALFGIWYITYGHELIWKNREPLVKIWHEMRTNSPKKGGGSK.

A mitochondrion-targeting transit peptide spans 1–52 (MAWRGWAQRGWGCGQAWTLPVCGGSYEELTAALAPSRLLRRRFNFFIQQKCG). The Mitochondrial matrix segment spans residues 53–99 (FRKAPRKVEPRRSDTSSEAYKRSALIPPVEETAFYPSPYPIRTLVKP). Ser65 and Ser68 each carry phosphoserine. Residues 100–119 (LFFTVGFTGCAFGSAAIWQY) traverse the membrane as a helical segment. Residues 120–165 (ESLKSKVQSYFDGIKADWLDSIRPQKEGDFRKEINKWWNNLSDGQR) lie on the Mitochondrial intermembrane side of the membrane. A helical transmembrane segment spans residues 166-185 (TVTGIIAANVFVFCLWRVPS). The Mitochondrial matrix portion of the chain corresponds to 186-205 (LQRTMIRYFTSNPASKVLCS). The chain crosses the membrane as a helical span at residues 206 to 228 (PMLLSTFSHFSLFHMAANMYVLW). Residues 229 to 242 (SFSSSIVNILGQEQ) lie on the Mitochondrial intermembrane side of the membrane. The chain crosses the membrane as a helical span at residues 243-260 (FMAVYLSAGVISTFVSYV). The Mitochondrial matrix segment spans residues 261 to 270 (CKVATGRYGP). A helical membrane pass occupies residues 271-287 (SLGASGAIMTVLAAVCT). The active-site Nucleophile is Ser275. Topologically, residues 288–293 (KIPEGR) are mitochondrial intermembrane. The chain crosses the membrane as a helical span at residues 294–316 (LAIIFLPMFTFTAGNALKAIIAM). At 317–330 (DTAGMILGWKFFDH) the chain is on the mitochondrial matrix side. Residues 331-352 (AAHLGGALFGIWYITYGHELIW) form a helical membrane-spanning segment. His333 is a catalytic residue. The Mitochondrial intermembrane segment spans residues 353–377 (KNREPLVKIWHEMRTNSPKKGGGSK).

It belongs to the peptidase S54 family. As to quaternary structure, interacts with PSEN1 and PSEN2. Binds OPA1. P-beta is proteolytically processed (beta-cleavage) in a PARL-dependent manner.

The protein resides in the mitochondrion inner membrane. It is found in the nucleus. It carries out the reaction Cleaves type-1 transmembrane domains using a catalytic dyad composed of serine and histidine that are contributed by different transmembrane domains.. Required for the control of apoptosis during postnatal growth. Essential for proteolytic processing of an antiapoptotic form of OPA1 which prevents the release of mitochondrial cytochrome c in response to intrinsic apoptotic signals. Required for the maturation of PINK1 into its 52kDa mature form after its cleavage by mitochondrial-processing peptidase (MPP). Promotes cleavage of serine/threonine-protein phosphatase PGAM5 in damaged mitochondria in response to loss of mitochondrial membrane potential. Mediates differential cleavage of PINK1 and PGAM5 depending on the health status of mitochondria, disassociating from PINK1 and associating with PGAM5 in response to mitochondrial membrane potential loss. Required for processing of CLPB into a form with higher protein disaggregase activity by removing an autoinhibitory N-terminal peptide. Promotes processing of DIABLO/SMAC in the mitochondrion which is required for DIABLO apoptotic activity. Also required for cleavage of STARD7 and TTC19. Promotes changes in mitochondria morphology regulated by phosphorylation of P-beta domain. This is Presenilin-associated rhomboid-like protein, mitochondrial (PARL) from Bos taurus (Bovine).